The primary structure comprises 65 residues: Sec-independent protein translocase protein TatA (65 aa).

Residues 1-21 (MFGLGGQELVLILLIILLLFG) form a helical membrane-spanning segment.

This sequence belongs to the TatA/E family. As to quaternary structure, forms a complex with TatC.

It localises to the cell inner membrane. Functionally, part of the twin-arginine translocation (Tat) system that transports large folded proteins containing a characteristic twin-arginine motif in their signal peptide across membranes. TatA could form the protein-conducting channel of the Tat system. The polypeptide is Sec-independent protein translocase protein TatA (Chlorobium phaeobacteroides (strain DSM 266 / SMG 266 / 2430)).